Reading from the N-terminus, the 331-residue chain is GTP 3',8-cyclase (331 aa).

Residues 6 to 231 (PFGRTISYLR…TDIPFKTGGP (226 aa)) enclose the Radical SAM core domain. Arginine 15 serves as a coordination point for GTP. [4Fe-4S] cluster is bound by residues cysteine 22 and cysteine 26. Position 28 (tyrosine 28) interacts with S-adenosyl-L-methionine. Cysteine 29 contributes to the [4Fe-4S] cluster binding site. A GTP-binding site is contributed by arginine 64. Glycine 68 is a binding site for S-adenosyl-L-methionine. Threonine 98 contacts GTP. An S-adenosyl-L-methionine-binding site is contributed by serine 122. A GTP-binding site is contributed by lysine 158. Residue methionine 192 participates in S-adenosyl-L-methionine binding. Residues cysteine 255 and cysteine 258 each contribute to the [4Fe-4S] cluster site. A GTP-binding site is contributed by 260–262 (RVR). Cysteine 272 is a binding site for [4Fe-4S] cluster.

It belongs to the radical SAM superfamily. MoaA family. As to quaternary structure, monomer and homodimer. [4Fe-4S] cluster serves as cofactor.

The enzyme catalyses GTP + AH2 + S-adenosyl-L-methionine = (8S)-3',8-cyclo-7,8-dihydroguanosine 5'-triphosphate + 5'-deoxyadenosine + L-methionine + A + H(+). The protein operates within cofactor biosynthesis; molybdopterin biosynthesis. In terms of biological role, catalyzes the cyclization of GTP to (8S)-3',8-cyclo-7,8-dihydroguanosine 5'-triphosphate. In Mesorhizobium japonicum (strain LMG 29417 / CECT 9101 / MAFF 303099) (Mesorhizobium loti (strain MAFF 303099)), this protein is GTP 3',8-cyclase.